The following is a 96-amino-acid chain: C-C motif chemokine 1 (96 aa).

The first 23 residues, 1 to 23, serve as a signal peptide directing secretion; the sequence is MQIITTALVCLLLAGMWPEDVDS. 3 cysteine pairs are disulfide-bonded: Cys-33–Cys-57, Cys-34–Cys-73, and Cys-49–Cys-91. A glycan (N-linked (GlcNAc...) asparagine) is linked at Asn-52.

Belongs to the intercrine beta (chemokine CC) family. As to quaternary structure, monomer.

Its subcellular location is the secreted. Its function is as follows. Cytokine that is chemotactic for monocytes but not for neutrophils. Binds to CCR8. The polypeptide is C-C motif chemokine 1 (CCL1) (Homo sapiens (Human)).